The chain runs to 533 residues: Suppressor of cytokine signaling 6 (533 aa).

Disordered stretches follow at residues 54-136 (CDIG…WPLR) and 177-199 (ELRDLQPEPRPESRCSPSSPGDL). Residues 59-69 (EDEKGKNRSKS) are compositionally biased toward basic and acidic residues. Residues 76-88 (LKRRLSAKQKTKG) show a composition bias toward basic residues. The segment covering 177-189 (ELRDLQPEPRPES) has biased composition (basic and acidic residues). An SH2 domain is found at 382–489 (WYWGPITRWE…TYPVRLTNPV (108 aa)). Residues 484-533 (RLTNPVSRFMQVRSLQYLCRFVIRQYTRIDLIQKLPLPNKMKDYLQEKHY) enclose the SOCS box domain.

In terms of assembly, interacts with KIT (phosphorylated). Interacts with RBCK1. Interacts with phosphorylated IRS4. Interacts with PIM3.

The protein operates within protein modification; protein ubiquitination. SOCS family proteins form part of a classical negative feedback system that regulates cytokine signal transduction. May be a substrate recognition component of a SCF-like ECS (Elongin BC-CUL2/5-SOCS-box protein) E3 ubiquitin-protein ligase complex which mediates the ubiquitination and subsequent proteasomal degradation of target proteins. Regulates KIT degradation by ubiquitination of the tyrosine-phosphorylated receptor. The sequence is that of Suppressor of cytokine signaling 6 (Socs6) from Mus musculus (Mouse).